We begin with the raw amino-acid sequence, 382 residues long: Lipid-A-disaccharide synthase (382 aa).

This sequence belongs to the LpxB family.

The enzyme catalyses 2-N,3-O-bis[(3R)-3-hydroxytetradecanoyl]-alpha-D-glucosaminyl 1-phosphate + UDP-2-N,3-O-bis[(3R)-3-hydroxytetradecanoyl]-alpha-D-glucosamine = lipid A disaccharide (E. coli) + UDP + H(+). It catalyses the reaction a lipid X + a UDP-2-N,3-O-bis[(3R)-3-hydroxyacyl]-alpha-D-glucosamine = a lipid A disaccharide + UDP + H(+). It participates in glycolipid biosynthesis; lipid IV(A) biosynthesis; lipid IV(A) from (3R)-3-hydroxytetradecanoyl-[acyl-carrier-protein] and UDP-N-acetyl-alpha-D-glucosamine: step 5/6. Its function is as follows. Condensation of UDP-2,3-diacylglucosamine and 2,3-diacylglucosamine-1-phosphate to form lipid A disaccharide, a precursor of lipid A, a phosphorylated glycolipid that anchors the lipopolysaccharide to the outer membrane of the cell. The chain is Lipid-A-disaccharide synthase from Salmonella arizonae (strain ATCC BAA-731 / CDC346-86 / RSK2980).